Reading from the N-terminus, the 372-residue chain is Protein Wnt-1 (372 aa).

A signal peptide spans methionine 1–alanine 29. Disulfide bonds link cysteine 77–cysteine 88, cysteine 130–cysteine 138, and cysteine 140–cysteine 158. Asparagine 87 carries N-linked (GlcNAc...) asparagine glycosylation. Asparagine 187 carries an N-linked (GlcNAc...) asparagine glycan. 8 disulfide bridges follow: cysteine 225-cysteine 239, cysteine 227-cysteine 234, cysteine 301-cysteine 332, cysteine 317-cysteine 327, cysteine 331-cysteine 371, cysteine 347-cysteine 362, cysteine 349-cysteine 359, and cysteine 354-cysteine 355. A lipid anchor (O-palmitoleoyl serine; by mom-1) is attached at serine 231.

The protein belongs to the Wnt family. Post-translationally, palmitoleoylation is required for efficient binding to frizzled receptors. Depalmitoleoylation leads to Wnt signaling pathway inhibition. As to expression, expressed in intestine, some head neurons and ventral nerve cord and pharyngeal neurons. Expressed in the tail and weakly expressed in the vulva and body wall muscles. Expressed highly in posterior dorsal and ventral muscle cells.

It localises to the secreted. Its subcellular location is the extracellular space. The protein localises to the extracellular matrix. It is found in the cytoplasm. The protein resides in the cell membrane. In terms of biological role, ligand for members of the frizzled family of seven transmembrane receptors. Probable developmental protein. May be a signaling molecule which affects the development of discrete regions of tissues. Is likely to signal over only few cell diameters. Binds receptor tyrosine kinase cam-1. Together with Wnt ligand cwn-2, regulates the migration of CAN, ALM, BDU and HSN neurons during embryogenesis, the migration of QL and QR neuroblast descendants during larval development, and polarity of ALM neurons. Also acts with the Wnt ligand egl-20 to direct HSN neuron migration. Acts through the Wnt receptor cfz-2 to direct ALM migration. Also plays a role in axon growth and guidance in HSN and male CP neurons. In addition, together with Wnt ligand cwn-2, negatively regulates developmental neurite pruning of AIM neurons probably by acting as a ligand for receptor tyrosine kinase cam-1. Probably by activating the Wnt/Frizzled pathway, may regulate vulva development. May act redundantly with other Wnt ligands such as cwn-2 and mom-2 to control seam cell polarity. The protein is Protein Wnt-1 (cwn-1) of Caenorhabditis elegans.